The chain runs to 378 residues: Mannitol-1-phosphate 5-dehydrogenase (378 aa).

An NAD(+)-binding site is contributed by 4–15; the sequence is SVHFGAGNIGRG.

This sequence belongs to the mannitol dehydrogenase family.

It catalyses the reaction D-mannitol 1-phosphate + NAD(+) = beta-D-fructose 6-phosphate + NADH + H(+). This is Mannitol-1-phosphate 5-dehydrogenase from Streptococcus pneumoniae (strain 70585).